The chain runs to 304 residues: Acetylglutamate kinase (304 aa).

Substrate is bound by residues 77–78, R99, and N193; that span reads GG.

It belongs to the acetylglutamate kinase family. ArgB subfamily.

The protein resides in the cytoplasm. The enzyme catalyses N-acetyl-L-glutamate + ATP = N-acetyl-L-glutamyl 5-phosphate + ADP. It functions in the pathway amino-acid biosynthesis; L-arginine biosynthesis; N(2)-acetyl-L-ornithine from L-glutamate: step 2/4. In terms of biological role, catalyzes the ATP-dependent phosphorylation of N-acetyl-L-glutamate. The protein is Acetylglutamate kinase of Pelodictyon phaeoclathratiforme (strain DSM 5477 / BU-1).